A 462-amino-acid polypeptide reads, in one-letter code: NEDD8-activating enzyme E1 catalytic subunit (462 aa).

Residue alanine 2 is modified to N-acetylalanine. The segment at 53 to 70 (HPDFEPSTESLQFLLDTC) is interaction with UBE2M N-terminus. Residues 100–124 (DMDT…GRPK) and 148–171 (IQDF…SIIA) each bind ATP. Interaction with UBE2M N-terminus regions lie at residues 157–161 (RQFHI) and 192–217 (PSSI…LPGM). Residues 227 to 229 (LYP) are interaction with NEDD8. Residue cysteine 237 is the Glycyl thioester intermediate of the active site. Interaction with NAE1 stretches follow at residues 242-248 (MPRLPEH) and 292-295 (YNIR). The tract at residues 331 to 338 (IATSAYIP) is interaction with UBE2M N-terminus. Residues 352 to 357 (YTYTFE) form an interaction with NEDD8 region. The segment at 368–462 (SQLPQNIQFS…QTVLFKLHFT (95 aa)) is interaction with UBE2M core domain.

This sequence belongs to the ubiquitin-activating E1 family. UBA3 subfamily. As to quaternary structure, heterodimer of UBA3 and NAE1. Interacts with NEDD8, UBE2F and UBE2M. Binds ESR1 and ESR2 with bound steroid ligand. Interacts with TBATA. As to expression, ubiquitously expressed.

The enzyme catalyses ATP + [NEDD8 protein] + [E1 NEDD8-activating enzyme]-L-cysteine = AMP + diphosphate + [E1 NEDD8-activating enzyme]-S-[NEDD8 protein]-yl-L-cysteine.. The protein operates within protein modification; protein neddylation. With respect to regulation, binding of TP53BP2 to the regulatory subunit NAE1 decreases activity. In terms of biological role, catalytic subunit of the dimeric UBA3-NAE1 E1 enzyme. E1 activates NEDD8 by first adenylating its C-terminal glycine residue with ATP, thereafter linking this residue to the side chain of the catalytic cysteine, yielding a NEDD8-UBA3 thioester and free AMP. E1 finally transfers NEDD8 to the catalytic cysteine of UBE2M. Down-regulates steroid receptor activity. Necessary for cell cycle progression. The sequence is that of NEDD8-activating enzyme E1 catalytic subunit (Uba3) from Rattus norvegicus (Rat).